We begin with the raw amino-acid sequence, 167 residues long: S-ribosylhomocysteine lyase (167 aa).

3 residues coordinate Fe cation: histidine 54, histidine 58, and cysteine 128.

This sequence belongs to the LuxS family. As to quaternary structure, homodimer. Fe cation is required as a cofactor.

The enzyme catalyses S-(5-deoxy-D-ribos-5-yl)-L-homocysteine = (S)-4,5-dihydroxypentane-2,3-dione + L-homocysteine. Involved in the synthesis of autoinducer 2 (AI-2) which is secreted by bacteria and is used to communicate both the cell density and the metabolic potential of the environment. The regulation of gene expression in response to changes in cell density is called quorum sensing. Catalyzes the transformation of S-ribosylhomocysteine (RHC) to homocysteine (HC) and 4,5-dihydroxy-2,3-pentadione (DPD). The polypeptide is S-ribosylhomocysteine lyase (Haemophilus influenzae (strain PittGG)).